The primary structure comprises 863 residues: Bifunctional uridylyltransferase/uridylyl-removing enzyme (863 aa).

Residues M1 to Q328 form a uridylyltransferase region. The interval L329–T687 is uridylyl-removing. The HD domain maps to V446 to L568. ACT domains follow at residues E688 to Q772 and Q794 to G863.

The protein belongs to the GlnD family. The cofactor is Mg(2+).

It carries out the reaction [protein-PII]-L-tyrosine + UTP = [protein-PII]-uridylyl-L-tyrosine + diphosphate. The enzyme catalyses [protein-PII]-uridylyl-L-tyrosine + H2O = [protein-PII]-L-tyrosine + UMP + H(+). Uridylyltransferase (UTase) activity is inhibited by glutamine, while glutamine activates uridylyl-removing (UR) activity. Modifies, by uridylylation and deuridylylation, the PII regulatory proteins (GlnB and homologs), in response to the nitrogen status of the cell that GlnD senses through the glutamine level. Under low glutamine levels, catalyzes the conversion of the PII proteins and UTP to PII-UMP and PPi, while under higher glutamine levels, GlnD hydrolyzes PII-UMP to PII and UMP (deuridylylation). Thus, controls uridylylation state and activity of the PII proteins, and plays an important role in the regulation of nitrogen assimilation and metabolism. This chain is Bifunctional uridylyltransferase/uridylyl-removing enzyme, found in Haemophilus influenzae (strain 86-028NP).